Reading from the N-terminus, the 172-residue chain is Peroxiredoxin AHP1 (172 aa).

Residues 4–171 (LQPGDSFPAN…VLTVLGNQGK (168 aa)) form the Thioredoxin domain. K44 is covalently cross-linked (Glycyl lysine isopeptide (Lys-Gly) (interchain with G-Cter in URM1)). Residue C60 is the Cysteine sulfenic acid (-SOH) intermediate of the active site. Position 60 is a cysteine persulfide (C60). Glycyl lysine isopeptide (Lys-Gly) (interchain with G-Cter in URM1) cross-links involve residues K63, K99, K141, K156, and K171.

Belongs to the peroxiredoxin family. Prx5 subfamily. As to quaternary structure, homodimer; disulfide-linked, upon oxidation. Post-translationally, conjugated to URM1, a ubiquitin-like protein, in response to oxidative stresses. The attachment of URM1 to lysine residues exclusively depends on the presence of a peroxidatic cysteine in the target protein, with low specificity for the particular residue, motif, or structural context at which urmylation can occur. The URM1-conjugation reaction is mechanistically and directly coupled to the process of cysteine persulfidation, transfering the sulfur atom of the URM1 thiocarboxyl group to redox-active cysteine residues in the target protein if it is exposed to oxidative conditions. Persulfidated on specific redox-active cysteine residues. Persulfidation (also called protein S-sulfhydration) may provide a molecular mechanism that enables cells to protect vulnerable cysteine residues from reactive oxygen species (ROS) under stress conditions.

Its subcellular location is the cytoplasm. The catalysed reaction is a hydroperoxide + [thioredoxin]-dithiol = an alcohol + [thioredoxin]-disulfide + H2O. In terms of biological role, thiol-specific peroxidase that catalyzes the reduction of hydrogen peroxide and organic hydroperoxides to water and alcohols, respectively. Plays a role in cell protection against oxidative stress by detoxifying peroxides and as sensor of hydrogen peroxide-mediated signaling events. Preferentially eliminates organic peroxides rather than hydrogen peroxide. Relays alkyl hydroperoxides as a signal to the transcription factor CAD1/YAP2 by inducing the formation of intramolecular disulfide bonds in CAD1, which causes its nuclear accumulation and activation. Involved in cellular Mn(2+) homeostasis. The polypeptide is Peroxiredoxin AHP1 (AHP1) (Chaetomium thermophilum (strain DSM 1495 / CBS 144.50 / IMI 039719) (Thermochaetoides thermophila)).